The primary structure comprises 351 residues: Carbamoyl phosphate synthase small chain (351 aa).

Residues 1–171 (MKGIIYLEDG…IIHIAGNGNK (171 aa)) form a CPSase region. L-glutamine-binding residues include Ser45, Gly219, and Gly221. The 181-residue stretch at 171–351 (KVAVMDFGIK…TYLFDQFVNL (181 aa)) folds into the Glutamine amidotransferase type-1 domain. Cys246 serves as the catalytic Nucleophile. Residues Leu247, Gln250, Asn288, Gly290, and Tyr291 each contribute to the L-glutamine site. Catalysis depends on residues His331 and Glu333.

It belongs to the CarA family. As to quaternary structure, composed of two chains; the small (or glutamine) chain promotes the hydrolysis of glutamine to ammonia, which is used by the large (or ammonia) chain to synthesize carbamoyl phosphate. Tetramer of heterodimers (alpha,beta)4.

It catalyses the reaction hydrogencarbonate + L-glutamine + 2 ATP + H2O = carbamoyl phosphate + L-glutamate + 2 ADP + phosphate + 2 H(+). The enzyme catalyses L-glutamine + H2O = L-glutamate + NH4(+). It participates in amino-acid biosynthesis; L-arginine biosynthesis; carbamoyl phosphate from bicarbonate: step 1/1. It functions in the pathway pyrimidine metabolism; UMP biosynthesis via de novo pathway; (S)-dihydroorotate from bicarbonate: step 1/3. In terms of biological role, small subunit of the glutamine-dependent carbamoyl phosphate synthetase (CPSase). CPSase catalyzes the formation of carbamoyl phosphate from the ammonia moiety of glutamine, carbonate, and phosphate donated by ATP, constituting the first step of 2 biosynthetic pathways, one leading to arginine and/or urea and the other to pyrimidine nucleotides. The small subunit (glutamine amidotransferase) binds and cleaves glutamine to supply the large subunit with the substrate ammonia. The protein is Carbamoyl phosphate synthase small chain of Clostridium acetobutylicum (strain ATCC 824 / DSM 792 / JCM 1419 / IAM 19013 / LMG 5710 / NBRC 13948 / NRRL B-527 / VKM B-1787 / 2291 / W).